The chain runs to 274 residues: NH(3)-dependent NAD(+) synthetase (274 aa).

46–53 is an ATP binding site; the sequence is GISGGQDS. Mg(2+) is bound at residue Asp-52. Arg-140 is a binding site for deamido-NAD(+). Position 160 (Thr-160) interacts with ATP. Glu-165 is a binding site for Mg(2+). Deamido-NAD(+)-binding residues include Lys-173 and Asp-180. 2 residues coordinate ATP: Lys-189 and Thr-211. 260–261 contributes to the deamido-NAD(+) binding site; sequence HK.

Belongs to the NAD synthetase family. Homodimer.

The enzyme catalyses deamido-NAD(+) + NH4(+) + ATP = AMP + diphosphate + NAD(+) + H(+). The protein operates within cofactor biosynthesis; NAD(+) biosynthesis; NAD(+) from deamido-NAD(+) (ammonia route): step 1/1. Its function is as follows. Catalyzes the ATP-dependent amidation of deamido-NAD to form NAD. Uses ammonia as a nitrogen source. The sequence is that of NH(3)-dependent NAD(+) synthetase from Streptococcus uberis (strain ATCC BAA-854 / 0140J).